The primary structure comprises 431 residues: 3-phosphoshikimate 1-carboxyvinyltransferase (431 aa).

3 residues coordinate 3-phosphoshikimate: lysine 21, serine 22, and arginine 26. Lysine 21 contacts phosphoenolpyruvate. Residues glycine 93 and arginine 121 each coordinate phosphoenolpyruvate. 3-phosphoshikimate-binding residues include serine 166, glutamine 168, serine 192, aspartate 317, and lysine 344. Glutamine 168 serves as a coordination point for phosphoenolpyruvate. Residue aspartate 317 is the Proton acceptor of the active site. 2 residues coordinate phosphoenolpyruvate: arginine 348 and arginine 390.

This sequence belongs to the EPSP synthase family. As to quaternary structure, monomer.

Its subcellular location is the cytoplasm. It carries out the reaction 3-phosphoshikimate + phosphoenolpyruvate = 5-O-(1-carboxyvinyl)-3-phosphoshikimate + phosphate. The protein operates within metabolic intermediate biosynthesis; chorismate biosynthesis; chorismate from D-erythrose 4-phosphate and phosphoenolpyruvate: step 6/7. Functionally, catalyzes the transfer of the enolpyruvyl moiety of phosphoenolpyruvate (PEP) to the 5-hydroxyl of shikimate-3-phosphate (S3P) to produce enolpyruvyl shikimate-3-phosphate and inorganic phosphate. The protein is 3-phosphoshikimate 1-carboxyvinyltransferase of Herpetosiphon aurantiacus (strain ATCC 23779 / DSM 785 / 114-95).